Reading from the N-terminus, the 100-residue chain is Large ribosomal subunit protein uL23c (100 aa).

The protein belongs to the universal ribosomal protein uL23 family. As to quaternary structure, part of the 50S ribosomal subunit.

The protein resides in the plastid. Its subcellular location is the chloroplast. Functionally, binds to 23S rRNA. In Euglena gracilis, this protein is Large ribosomal subunit protein uL23c (rpl23).